A 653-amino-acid chain; its full sequence is Beta-galactosidase-1-like protein 3 (653 aa).

Residue E227 is the Proton donor of the active site. E301 acts as the Nucleophile in catalysis.

This sequence belongs to the glycosyl hydrolase 35 family.

This Homo sapiens (Human) protein is Beta-galactosidase-1-like protein 3 (GLB1L3).